Here is a 70-residue protein sequence, read N- to C-terminus: Cytochrome c oxidase subunit 8B, mitochondrial (70 aa).

A mitochondrion-targeting transit peptide spans 1–24 (MSRLAPPLRLLQAPLKCWAVPKAH). Residues 25–35 (VSAKPARTPTS) lie on the Mitochondrial matrix side of the membrane. A helical membrane pass occupies residues 36–59 (PMEQAVGLSVMFVSFLVPSGWVLS). Topologically, residues 60 to 70 (HLESYKKSSTT) are mitochondrial intermembrane.

This sequence belongs to the cytochrome c oxidase VIII family. As to quaternary structure, component of the cytochrome c oxidase (complex IV, CIV), a multisubunit enzyme composed of 14 subunits. The complex is composed of a catalytic core of 3 subunits MT-CO1, MT-CO2 and MT-CO3, encoded in the mitochondrial DNA, and 11 supernumerary subunits COX4I, COX5A, COX5B, COX6A, COX6B, COX6C, COX7A, COX7B, COX7C, COX8 and NDUFA4, which are encoded in the nuclear genome. The complex exists as a monomer or a dimer and forms supercomplexes (SCs) in the inner mitochondrial membrane with NADH-ubiquinone oxidoreductase (complex I, CI) and ubiquinol-cytochrome c oxidoreductase (cytochrome b-c1 complex, complex III, CIII), resulting in different assemblies (supercomplex SCI(1)III(2)IV(1) and megacomplex MCI(2)III(2)IV(2)).

It localises to the mitochondrion inner membrane. It participates in energy metabolism; oxidative phosphorylation. In terms of biological role, component of the cytochrome c oxidase, the last enzyme in the mitochondrial electron transport chain which drives oxidative phosphorylation. The respiratory chain contains 3 multisubunit complexes succinate dehydrogenase (complex II, CII), ubiquinol-cytochrome c oxidoreductase (cytochrome b-c1 complex, complex III, CIII) and cytochrome c oxidase (complex IV, CIV), that cooperate to transfer electrons derived from NADH and succinate to molecular oxygen, creating an electrochemical gradient over the inner membrane that drives transmembrane transport and the ATP synthase. Cytochrome c oxidase is the component of the respiratory chain that catalyzes the reduction of oxygen to water. Electrons originating from reduced cytochrome c in the intermembrane space (IMS) are transferred via the dinuclear copper A center (CU(A)) of subunit 2 and heme A of subunit 1 to the active site in subunit 1, a binuclear center (BNC) formed by heme A3 and copper B (CU(B)). The BNC reduces molecular oxygen to 2 water molecules using 4 electrons from cytochrome c in the IMS and 4 protons from the mitochondrial matrix. The polypeptide is Cytochrome c oxidase subunit 8B, mitochondrial (COX8B) (Carlito syrichta (Philippine tarsier)).